The chain runs to 963 residues: Phosphoenolpyruvate carboxylase 2 (963 aa).

S11 carries the post-translational modification Phosphoserine. Residues H172 and K599 contribute to the active site. S701 is modified (phosphoserine).

It belongs to the PEPCase type 1 family. As to quaternary structure, homotetramer. It depends on Mg(2+) as a cofactor. In terms of tissue distribution, expressed in all plant organs, with higher levels in stems and leaves.

The protein resides in the cytoplasm. It catalyses the reaction oxaloacetate + phosphate = phosphoenolpyruvate + hydrogencarbonate. By light-reversible phosphorylation. In terms of biological role, through the carboxylation of phosphoenolpyruvate (PEP) it forms oxaloacetate, a four-carbon dicarboxylic acid source for the tricarboxylic acid cycle. The chain is Phosphoenolpyruvate carboxylase 2 (PPC2) from Arabidopsis thaliana (Mouse-ear cress).